The primary structure comprises 310 residues: HTH-type transcriptional activator TtdR (310 aa).

Positions 6-63 (PLAKDLQVLVEIVHSGSFSAAAATLGQTPAFVTKRIQILENTLATTLLNRSARGVALT) constitute an HTH lysR-type domain. Residues 23–42 (FSAAAATLGQTPAFVTKRIQ) constitute a DNA-binding region (H-T-H motif).

Belongs to the LysR transcriptional regulatory family.

Functionally, positive regulator required for L-tartrate-dependent anaerobic growth on glycerol. Induces expression of the ttdA-ttdB-ygjE operon. In Escherichia coli O6:K15:H31 (strain 536 / UPEC), this protein is HTH-type transcriptional activator TtdR (ttdR).